Here is a 768-residue protein sequence, read N- to C-terminus: DNA ligase 1 (768 aa).

The disordered stretch occupies residues 42-139 (VEVSQSSSDS…KEPPLESNAR (98 aa)). A compositionally biased stretch (basic and acidic residues) spans 52-99 (KNVDGRSTSEKRKVESVKLVDESKHNNHDDTGTQNVERENNIVSEAKK). The segment covering 104 to 124 (GSSSSSSDAVSSNNDSGASTP) has biased composition (low complexity). The interaction with target DNA stretch occupies residues 309-318 (KLRLQLAEKT). E414 lines the ATP pocket. K416 acts as the N6-AMP-lysine intermediate in catalysis. Residues R421 and R437 each contribute to the ATP site. E469 lines the Mg(2+) pocket. The interaction with target DNA stretch occupies residues 490 to 492 (KRK). E568 serves as a coordination point for Mg(2+). ATP-binding residues include K573, R587, and K593.

Belongs to the ATP-dependent DNA ligase family. Mg(2+) is required as a cofactor.

It localises to the nucleus. It carries out the reaction ATP + (deoxyribonucleotide)n-3'-hydroxyl + 5'-phospho-(deoxyribonucleotide)m = (deoxyribonucleotide)n+m + AMP + diphosphate.. In terms of biological role, DNA ligase that seals nicks in double-stranded DNA during DNA replication, DNA recombination and DNA repair. The protein is DNA ligase 1 (cdc17) of Schizosaccharomyces pombe (strain 972 / ATCC 24843) (Fission yeast).